Consider the following 227-residue polypeptide: Tegument protein ORF55 (227 aa).

Residue Cys-11 is the site of S-palmitoyl cysteine; by host attachment. A disordered region spans residues 183 to 227 (VTRQPEATLPKPPTEDPSVSAMHSSIPPRPSSTLEETTESAIGST). The span at 213–227 (SSTLEETTESAIGST) shows a compositional bias: polar residues.

The protein belongs to the herpesviridae UL51 family. In terms of assembly, oligomerizes. Interacts with ORF42; this interaction mediates ORF42 incorporation to virions. Interacts with vBCL2. Phosphorylated. Post-translationally, palmitoylation is necessary for Golgi localization.

It localises to the virion tegument. The protein resides in the host cytoplasm. The protein localises to the host Golgi apparatus. Plays several roles during the time course of infection, including egress of virus particles from the perinuclear space and secondary envelopment of cytoplasmic capsids that bud into specific trans-Golgi network (TGN)-derived membranes. The sequence is that of Tegument protein ORF55 (ORF55) from Homo sapiens (Human).